The chain runs to 270 residues: Interleukin-1 alpha (270 aa).

A propeptide spanning residues 1–112 (MAKVPDLFED…DTEEEIIKPR (112 aa)) is cleaved from the precursor. At lysine 82 the chain carries N6-acetyllysine. Residues 82–86 (KKRRL) are nuclear localization signal (NLS). Phosphoserine is present on serine 87. Residues asparagine 102 and asparagine 141 are each glycosylated (N-linked (GlcNAc...) asparagine).

The protein belongs to the IL-1 family. Monomer. Interacts with TMED10; the interaction mediates the translocation from the cytoplasm into the ERGIC (endoplasmic reticulum-Golgi intermediate compartment) and thereby secretion. Interacts with IL1R1. Interacts with S100A13; this interaction is the first step in the export of IL1A, followed by direct translocation of this complex across the plasma membrane. Post-translationally, acetylated within its nuclear localization sequence, which impacts subcellular localization. In terms of processing, proteolytic processed by CAPN1 in a calcium-dependent manner. Cleavage from 31 kDa precursor to 18 kDa biologically active molecules. Phosphorylated. Phosphorylation greatly enhances susceptibility to digestion and promotes the conversion of pre-IL1A alpha to the biologically active IL1A.

It localises to the nucleus. Its subcellular location is the cytoplasm. The protein localises to the secreted. In terms of biological role, cytokine constitutively present intracellularly in nearly all resting non-hematopoietic cells that plays an important role in inflammation and bridges the innate and adaptive immune systems. After binding to its receptor IL1R1 together with its accessory protein IL1RAP, forms the high affinity interleukin-1 receptor complex. Signaling involves the recruitment of adapter molecules such as MYD88, IRAK1 or IRAK4. In turn, mediates the activation of NF-kappa-B and the three MAPK pathways p38, p42/p44 and JNK pathways. Within the cell, acts as an alarmin and cell death results in its liberation in the extracellular space after disruption of the cell membrane to induce inflammation and alert the host to injury or damage. In addition to its role as a danger signal, which occurs when the cytokine is passively released by cell necrosis, directly senses DNA damage and acts as signal for genotoxic stress without loss of cell integrity. The chain is Interleukin-1 alpha (IL1A) from Sus scrofa (Pig).